The primary structure comprises 1057 residues: Carbamoyl phosphate synthase large chain (1057 aa).

A carboxyphosphate synthetic domain region spans residues 1–401 (MPKRQDIETI…SLLKAIRSLE (401 aa)). Positions 129, 169, 175, 176, 208, 210, 215, 241, 242, 243, 284, and 298 each coordinate ATP. Positions 133–327 (RTLMNDLGVP…IAKLAAKIAI (195 aa)) constitute an ATP-grasp 1 domain. Mg(2+)-binding residues include Gln-284, Glu-298, and Asn-300. Mn(2+)-binding residues include Gln-284, Glu-298, and Asn-300. The interval 402–546 (YGVHHLGLPN…YGTYEYENES (145 aa)) is oligomerization domain. The segment at 547–929 (VVTEKEKILV…ALFKGLTASG (383 aa)) is carbamoyl phosphate synthetic domain. Residues 671-861 (EALLHTIDVP…MAQLAMRAII (191 aa)) form the ATP-grasp 2 domain. Positions 707, 746, 748, 752, 777, 778, 779, 780, 820, and 832 each coordinate ATP. Residues Gln-820, Glu-832, and Asn-834 each contribute to the Mg(2+) site. Positions 820, 832, and 834 each coordinate Mn(2+). Residues 930–1057 (MEVKDHGTVL…ESMTFTMKNM (128 aa)) form the MGS-like domain. An allosteric domain region spans residues 930-1057 (MEVKDHGTVL…ESMTFTMKNM (128 aa)).

This sequence belongs to the CarB family. As to quaternary structure, composed of two chains; the small (or glutamine) chain promotes the hydrolysis of glutamine to ammonia, which is used by the large (or ammonia) chain to synthesize carbamoyl phosphate. Tetramer of heterodimers (alpha,beta)4. Mg(2+) is required as a cofactor. It depends on Mn(2+) as a cofactor.

The catalysed reaction is hydrogencarbonate + L-glutamine + 2 ATP + H2O = carbamoyl phosphate + L-glutamate + 2 ADP + phosphate + 2 H(+). It catalyses the reaction hydrogencarbonate + NH4(+) + 2 ATP = carbamoyl phosphate + 2 ADP + phosphate + 2 H(+). It participates in amino-acid biosynthesis; L-arginine biosynthesis; carbamoyl phosphate from bicarbonate: step 1/1. The protein operates within pyrimidine metabolism; UMP biosynthesis via de novo pathway; (S)-dihydroorotate from bicarbonate: step 1/3. In terms of biological role, large subunit of the glutamine-dependent carbamoyl phosphate synthetase (CPSase). CPSase catalyzes the formation of carbamoyl phosphate from the ammonia moiety of glutamine, carbonate, and phosphate donated by ATP, constituting the first step of 2 biosynthetic pathways, one leading to arginine and/or urea and the other to pyrimidine nucleotides. The large subunit (synthetase) binds the substrates ammonia (free or transferred from glutamine from the small subunit), hydrogencarbonate and ATP and carries out an ATP-coupled ligase reaction, activating hydrogencarbonate by forming carboxy phosphate which reacts with ammonia to form carbamoyl phosphate. This Staphylococcus saprophyticus subsp. saprophyticus (strain ATCC 15305 / DSM 20229 / NCIMB 8711 / NCTC 7292 / S-41) protein is Carbamoyl phosphate synthase large chain.